We begin with the raw amino-acid sequence, 311 residues long: MNPDLLDHTVAEIAAEMAQRPDRGAVASYIPELAGVDPQRFGLVVIDADGHVAAGGDADMPFSIQSISKVFTLTLALGLAGDRVWRRVGREPSGSAFNSIVQLERERGIPRNPFINAGAIAVTDLILSGHQPREALGEILRFMQFLAGDDSIVIDDAVAASEQRTGFRNAALANYMKSFGVLDNPVEYTLGVYFHHCAIAMSCRQLALAGRFLAHNGRNPSTGHNVVSTQRARRINALMLTCGHYDGSGEFAYRVGLPGKSGVGGGVLAVAPGKASIAVWSPGLDAAGNSHLGRIALEALTRRLGWSIFGV.

7 residues coordinate substrate: Ser66, Asn116, Glu162, Asn169, Tyr193, Tyr245, and Val263.

The protein belongs to the glutaminase family. In terms of assembly, homotetramer.

The enzyme catalyses L-glutamine + H2O = L-glutamate + NH4(+). The polypeptide is Glutaminase (Rhodopseudomonas palustris (strain HaA2)).